The following is a 499-amino-acid chain: BTB/POZ domain-containing protein At5g60050 (499 aa).

The segment covering 18–30 (PSLSFSPSRISSP) has biased composition (low complexity). Positions 18 to 57 (PSLSFSPSRISSPIKLSTASPPLPPPPPPPPNESTLSNPT) are disordered. Over residues 38–49 (PPLPPPPPPPPN) the composition is skewed to pro residues. Residues 99–172 (GDVKLTVVGK…MYSDDLKKKL (74 aa)) enclose the BTB domain.

It functions in the pathway protein modification; protein ubiquitination. May act as a substrate-specific adapter of an E3 ubiquitin-protein ligase complex (CUL3-RBX1-BTB) which mediates the ubiquitination and subsequent proteasomal degradation of target proteins. This Arabidopsis thaliana (Mouse-ear cress) protein is BTB/POZ domain-containing protein At5g60050.